The sequence spans 426 residues: MHDIRLIRENAEAFDAALARRGVGPVAQSILSLDSRRREIATRMQEVQARRNEASKAIGAAMGKGDKDTAEALKAEVAALKVELPALEEEERQLTAQQNAALAAYPNTPAADVPEGADEADNVEVSRWGTPRDFAFAPKEHADLGPALGLDFETGALISGARFTFLKGQMARLHRALAQFMLDRQTGENGYMECIPPLLVKDEAVFGTGQLPKFAEDLFRTTDGRWLIPTAEVSLTNAVQGQILGEAQLPLRMTALTPCFRSEAGAAGRDTRGFIRQHQFEKVELVSITRPEDSESEHERMTQCAEGILQALGLPYRKVLLCTGDMGFTARKTYDLEVWLPGQGAYREISSCSNCGDFQARRMNARYRPEGAKGTEFVHTLNGSGLAVGRTLVAVLENYQQEDGSVAVPEVLLPYMGGLARLTPQG.

230–232 (TAE) is a binding site for L-serine. 261 to 263 (RSE) provides a ligand contact to ATP. Glutamate 284 lines the L-serine pocket. 348-351 (EISS) contacts ATP. Serine 384 is an L-serine binding site.

It belongs to the class-II aminoacyl-tRNA synthetase family. Type-1 seryl-tRNA synthetase subfamily. Homodimer. The tRNA molecule binds across the dimer.

It localises to the cytoplasm. The enzyme catalyses tRNA(Ser) + L-serine + ATP = L-seryl-tRNA(Ser) + AMP + diphosphate + H(+). It carries out the reaction tRNA(Sec) + L-serine + ATP = L-seryl-tRNA(Sec) + AMP + diphosphate + H(+). The protein operates within aminoacyl-tRNA biosynthesis; selenocysteinyl-tRNA(Sec) biosynthesis; L-seryl-tRNA(Sec) from L-serine and tRNA(Sec): step 1/1. Catalyzes the attachment of serine to tRNA(Ser). Is also able to aminoacylate tRNA(Sec) with serine, to form the misacylated tRNA L-seryl-tRNA(Sec), which will be further converted into selenocysteinyl-tRNA(Sec). The polypeptide is Serine--tRNA ligase (Novosphingobium aromaticivorans (strain ATCC 700278 / DSM 12444 / CCUG 56034 / CIP 105152 / NBRC 16084 / F199)).